The following is a 158-amino-acid chain: Transcription factor BTF3 homolog 4 (158 aa).

Residues 33–98 (TADDKKLQSS…AEAKPITEML (66 aa)) enclose the NAC-A/B domain. Residues 124 to 158 (VLDSKAPKSEDIDEEDDDVPDLAENFDEASKNEAN) form a disordered region. The segment covering 134 to 150 (DIDEEDDDVPDLAENFD) has biased composition (acidic residues).

The protein belongs to the NAC-beta family.

This chain is Transcription factor BTF3 homolog 4 (BTF3L4), found in Gallus gallus (Chicken).